The sequence spans 108 residues: Protein YcgL (108 aa).

The 85-residue stretch at 12-96 (MFCVIYRSSK…PPEDLLKQHL (85 aa)) folds into the YcgL domain.

This chain is Protein YcgL, found in Escherichia coli (strain K12 / MC4100 / BW2952).